The primary structure comprises 235 residues: Large ribosomal subunit protein uL1 (235 aa).

Belongs to the universal ribosomal protein uL1 family. In terms of assembly, part of the 50S ribosomal subunit.

Its function is as follows. Binds directly to 23S rRNA. The L1 stalk is quite mobile in the ribosome, and is involved in E site tRNA release. In terms of biological role, protein L1 is also a translational repressor protein, it controls the translation of the L11 operon by binding to its mRNA. The polypeptide is Large ribosomal subunit protein uL1 (Citrobacter koseri (strain ATCC BAA-895 / CDC 4225-83 / SGSC4696)).